Reading from the N-terminus, the 1553-residue chain is Sterol 3-beta-glucosyltransferase (1553 aa).

2 stretches are compositionally biased toward polar residues: residues 1–10 (MASSQPTSSG) and 25–36 (LNTETSSSQHRA). Disordered stretches follow at residues 1-106 (MASS…NEED) and 189-270 (PASA…GLAP). Positions 90–100 (LPDRLKDNGKE) are enriched in basic and acidic residues. Over residues 211–222 (LLQSVPSLSRLS) the composition is skewed to low complexity. Over residues 223–232 (SSHKSKKTKQ) the composition is skewed to basic residues. 2 GRAM domains span residues 323–370 (KKLK…HLPK) and 464–495 (SLQR…EEAQ). The 97-residue stretch at 374-470 (EIAKSGYLSK…WVKSLQRVIF (97 aa)) folds into the PH domain. 3 disordered regions span residues 542–569 (SPED…GSPR), 611–662 (FSRR…FDDP), and 805–825 (GKKH…VEDD). Residues 633–650 (LHGDGRRSFSKPRHEPHA) show a composition bias toward basic and acidic residues. Residues 651–662 (STDSYAQSFDDP) show a composition bias toward polar residues. Basic and acidic residues predominate over residues 810–819 (DHPAGRRTER). A GRAM 3 domain is found at 834–900 (ARFQAHFALP…KDIETVDKEK (67 aa)). 11 residues coordinate UDP-alpha-D-glucose: Ser-1020, Arg-1021, Asp-1023, Ala-1328, His-1330, His-1343, Ser-1346, Gly-1347, Thr-1348, Asp-1367, and Gln-1368. Disordered regions lie at residues 1446 to 1504 (KHQS…GSMS) and 1527 to 1553 (PALG…VKYV). Acidic residues predominate over residues 1466 to 1488 (PEDDQGQAAEEDDIDADDEEEES).

It belongs to the glycosyltransferase 28 family.

It localises to the cytoplasm. The protein localises to the preautophagosomal structure membrane. It carries out the reaction a sterol + UDP-alpha-D-glucose = a sterol 3-beta-D-glucoside + UDP + H(+). The enzyme catalyses ergosterol + UDP-alpha-D-glucose = ergosteryl 3-beta-D-glucoside + UDP + H(+). Sterol glycosyltransferase responsible for the glycosylation of ergosterol to form ergosterol-glucoside. The protein is Sterol 3-beta-glucosyltransferase (apg-12) of Neurospora crassa (strain ATCC 24698 / 74-OR23-1A / CBS 708.71 / DSM 1257 / FGSC 987).